The chain runs to 219 residues: EP300-interacting inhibitor of differentiation 2 (219 aa).

A disordered region spans residues 1–71 (MSELPADQGV…PVPEAREGPM (71 aa)). Residues 20–34 (GDVRQAEVGGRRREP) are compositionally biased toward basic and acidic residues. Arginine 75 is subject to Omega-N-methylarginine. Positions 95–115 (AEPAEEEGPEGRPRSRPGNGP) are disordered.

Heterodimer with EID2B. Interacts with the C-terminus of EP300. Interacts with HDAC1 and HDAC2. Interacts with SMAD2, SMAD4 and with the MH2 domain of SMAD3.

It is found in the nucleus. Its function is as follows. Interacts with EP300 and acts as a repressor of MYOD-dependent transcription and muscle differentiation. Inhibits EP300 histone acetyltransferase activity. Acts as a repressor of TGFB/SMAD transcriptional responses. May act as a repressor of the TGFB/SMAD3-dependent signaling by selectively blocking formation of TGFB-induced SMAD3-SMAD4 complex. This is EP300-interacting inhibitor of differentiation 2 from Bos taurus (Bovine).